The primary structure comprises 487 residues: Glutamyl-tRNA(Gln) amidotransferase subunit A (487 aa).

Catalysis depends on charge relay system residues Lys-78 and Ser-153. The active-site Acyl-ester intermediate is Ser-177.

It belongs to the amidase family. GatA subfamily. As to quaternary structure, heterotrimer of A, B and C subunits.

The enzyme catalyses L-glutamyl-tRNA(Gln) + L-glutamine + ATP + H2O = L-glutaminyl-tRNA(Gln) + L-glutamate + ADP + phosphate + H(+). Functionally, allows the formation of correctly charged Gln-tRNA(Gln) through the transamidation of misacylated Glu-tRNA(Gln) in organisms which lack glutaminyl-tRNA synthetase. The reaction takes place in the presence of glutamine and ATP through an activated gamma-phospho-Glu-tRNA(Gln). The sequence is that of Glutamyl-tRNA(Gln) amidotransferase subunit A from Oenococcus oeni (strain ATCC BAA-331 / PSU-1).